We begin with the raw amino-acid sequence, 464 residues long: Protein FAM90A22 (464 aa).

Disordered stretches follow at residues 1–43 (MMAR…PRLK), 70–389 (PATL…HDGA), and 415–437 (HSPE…SEAP). 2 stretches are compositionally biased toward basic and acidic residues: residues 74 to 89 (GKKE…KPRA) and 97 to 114 (NKDK…DPQR). Low complexity predominate over residues 182–197 (SLSPLRKTSLSSSSSL).

Belongs to the FAM90 family.

The protein is Protein FAM90A22 of Homo sapiens (Human).